The chain runs to 70 residues: Large ribosomal subunit protein bL31 (70 aa).

The Zn(2+) site is built by Cys-16, Cys-18, Cys-37, and Cys-40.

It belongs to the bacterial ribosomal protein bL31 family. Type A subfamily. As to quaternary structure, part of the 50S ribosomal subunit. Zn(2+) is required as a cofactor.

Binds the 23S rRNA. The sequence is that of Large ribosomal subunit protein bL31 from Haemophilus ducreyi (strain 35000HP / ATCC 700724).